A 665-amino-acid polypeptide reads, in one-letter code: Kinesin-like protein KIF22 (665 aa).

In terms of domain architecture, Kinesin motor spans 43–368 (RVRVAVRLRP…LNFAARSKEV (326 aa)). ATP is bound at residue 127-134 (GPTGAGKT). Residues 379–428 (QPHALGPVKLSQKELLGPPEAKRARGPEEEEIGSPEPMAAPASASQKLSP) are disordered. A phosphoserine mark is found at Ser-412, Ser-427, and Ser-452. A compositionally biased stretch (low complexity) spans 412–428 (SPEPMAAPASASQKLSP). Lys-465 participates in a covalent cross-link: Glycyl lysine isopeptide (Lys-Gly) (interchain with G-Cter in SUMO2). Residues 465–508 (KRERMVLMKTVEEKDLEIERLKTKQKELEAKMLAQKAEEKENHC) adopt a coiled-coil conformation. Ser-543, Ser-562, and Ser-581 each carry phosphoserine.

The protein belongs to the TRAFAC class myosin-kinesin ATPase superfamily. Kinesin family. As to quaternary structure, interacts with FAM83D. Interacts with SIAH1. In terms of processing, ubiquitinated; mediated by SIAH1 and leading to its subsequent proteasomal degradation. As to expression, expressed in bone, cartilage, joint capsule, ligament, skin, and primary cultured chondrocytes.

The protein resides in the nucleus. It localises to the cytoplasm. It is found in the cytoskeleton. Its function is as follows. Kinesin family member that is involved in spindle formation and the movements of chromosomes during mitosis and meiosis. Binds to microtubules and to DNA. Plays a role in congression of laterally attached chromosomes in NDC80-depleted cells. In Homo sapiens (Human), this protein is Kinesin-like protein KIF22 (KIF22).